The following is a 211-amino-acid chain: Large ribosomal subunit protein uL4 (211 aa).

The disordered stretch occupies residues Ala42–Gly87. Basic residues predominate over residues Gly60–Gly71.

This sequence belongs to the universal ribosomal protein uL4 family. As to quaternary structure, part of the 50S ribosomal subunit.

Its function is as follows. One of the primary rRNA binding proteins, this protein initially binds near the 5'-end of the 23S rRNA. It is important during the early stages of 50S assembly. It makes multiple contacts with different domains of the 23S rRNA in the assembled 50S subunit and ribosome. In terms of biological role, forms part of the polypeptide exit tunnel. This Synechococcus sp. (strain CC9902) protein is Large ribosomal subunit protein uL4.